A 433-amino-acid polypeptide reads, in one-letter code: Protein translocase subunit SecY (433 aa).

Helical transmembrane passes span 17 to 37, 71 to 91, 117 to 137, 141 to 161, 184 to 204, 212 to 232, 268 to 288, 310 to 330, 366 to 386, and 388 to 408; these read IVFTILILIVCRFGSFIPIPG, IFALAIMPYITASIIIQLMSV, LTVLLASFQAYGVAISLESIV, GPVVILAGFFFRVTTVITLVV, LIIFIGIISGVPSAIISMFEL, PLIALAVCIGVVVLIAIIIFF, GVIPPIFASSILLFPATLANF, YILLYVALIMFFSFFYTAIVF, LTVIGGIYLSVICVIPELLMN, and YVISLSLGGTSFLIVVNVVLD.

This sequence belongs to the SecY/SEC61-alpha family. Component of the Sec protein translocase complex. Heterotrimer consisting of SecY, SecE and SecG subunits. The heterotrimers can form oligomers, although 1 heterotrimer is thought to be able to translocate proteins. Interacts with the ribosome. Interacts with SecDF, and other proteins may be involved. Interacts with SecA.

The protein resides in the cell inner membrane. Its function is as follows. The central subunit of the protein translocation channel SecYEG. Consists of two halves formed by TMs 1-5 and 6-10. These two domains form a lateral gate at the front which open onto the bilayer between TMs 2 and 7, and are clamped together by SecE at the back. The channel is closed by both a pore ring composed of hydrophobic SecY resides and a short helix (helix 2A) on the extracellular side of the membrane which forms a plug. The plug probably moves laterally to allow the channel to open. The ring and the pore may move independently. In Rickettsia felis (strain ATCC VR-1525 / URRWXCal2) (Rickettsia azadi), this protein is Protein translocase subunit SecY.